Consider the following 156-residue polypeptide: Putative HTH-type transcriptional regulator BadM (156 aa).

The region spanning 4–130 (RLQKSTMCGL…RSVSITSLLK (127 aa)) is the HTH rrf2-type domain. Residues 136 to 156 (RRKTERGPNGASARHSSAGRA) form a disordered region. Residues 145-156 (GASARHSSAGRA) show a composition bias toward low complexity.

This chain is Putative HTH-type transcriptional regulator BadM (badM), found in Rhodopseudomonas palustris (strain ATCC BAA-98 / CGA009).